The primary structure comprises 1584 residues: Pentafunctional AROM polypeptide (1584 aa).

The tract at residues 1–384 is 3-dehydroquinate synthase; the sequence is MSQDTDVVSV…YEKHATVVSD (384 aa). Residues 46 to 48, 83 to 86, 114 to 116, and Asp119 contribute to the NAD(+) site; these read DTN, ETSK, and GGV. Arg130 is a binding site for 7-phospho-2-dehydro-3-deoxy-D-arabino-heptonate. An NAD(+)-binding site is contributed by 139–140; it reads TT. Residues Asp146 and Lys152 each coordinate 7-phospho-2-dehydro-3-deoxy-D-arabino-heptonate. Lys161 serves as a coordination point for NAD(+). 7-phospho-2-dehydro-3-deoxy-D-arabino-heptonate is bound at residue Asn162. NAD(+)-binding positions include 179–182 and Asn190; that span reads FLET. Glu194 is a Zn(2+) binding site. 7-phospho-2-dehydro-3-deoxy-D-arabino-heptonate is bound by residues 194 to 197 and Lys250; that span reads EVIK. Glu260 serves as the catalytic Proton acceptor; for 3-dehydroquinate synthase activity. 7-phospho-2-dehydro-3-deoxy-D-arabino-heptonate is bound by residues 264-268 and His271; that span reads RNLLN. His271 is a Zn(2+) binding site. Catalysis depends on His275, which acts as the Proton acceptor; for 3-dehydroquinate synthase activity. The 7-phospho-2-dehydro-3-deoxy-D-arabino-heptonate site is built by His287 and Lys356. His287 serves as a coordination point for Zn(2+). An EPSP synthase region spans residues 397–843; that stretch reads VSPFDNSVSD…WDVLRNSFKI (447 aa). Cys825 acts as the For EPSP synthase activity in catalysis. A shikimate kinase region spans residues 863–1058; sequence RASVILIGMR…IQKPHSFFLS (196 aa). 870 to 877 lines the ATP pocket; sequence GMRGAGKT. Residues 1059-1280 are 3-dehydroquinase; the sequence is LTFPNINDAI…AAPGQLSVRQ (222 aa). Catalysis depends on His1182, which acts as the Proton acceptor; for 3-dehydroquinate dehydratase activity. Residue Lys1211 is the Schiff-base intermediate with substrate; for 3-dehydroquinate dehydratase activity of the active site. A shikimate dehydrogenase region spans residues 1293–1584; sequence PKKFYLFGTP…YMVLCAKEHN (292 aa).

The protein in the N-terminal section; belongs to the sugar phosphate cyclases superfamily. Dehydroquinate synthase family. In the 2nd section; belongs to the EPSP synthase family. It in the 3rd section; belongs to the shikimate kinase family. This sequence in the 4th section; belongs to the type-I 3-dehydroquinase family. The protein in the C-terminal section; belongs to the shikimate dehydrogenase family. As to quaternary structure, homodimer. The cofactor is Zn(2+).

The protein resides in the cytoplasm. It carries out the reaction 7-phospho-2-dehydro-3-deoxy-D-arabino-heptonate = 3-dehydroquinate + phosphate. It catalyses the reaction 3-dehydroquinate = 3-dehydroshikimate + H2O. The catalysed reaction is shikimate + NADP(+) = 3-dehydroshikimate + NADPH + H(+). The enzyme catalyses shikimate + ATP = 3-phosphoshikimate + ADP + H(+). It carries out the reaction 3-phosphoshikimate + phosphoenolpyruvate = 5-O-(1-carboxyvinyl)-3-phosphoshikimate + phosphate. The protein operates within metabolic intermediate biosynthesis; chorismate biosynthesis; chorismate from D-erythrose 4-phosphate and phosphoenolpyruvate: step 2/7. Its pathway is metabolic intermediate biosynthesis; chorismate biosynthesis; chorismate from D-erythrose 4-phosphate and phosphoenolpyruvate: step 3/7. It participates in metabolic intermediate biosynthesis; chorismate biosynthesis; chorismate from D-erythrose 4-phosphate and phosphoenolpyruvate: step 4/7. It functions in the pathway metabolic intermediate biosynthesis; chorismate biosynthesis; chorismate from D-erythrose 4-phosphate and phosphoenolpyruvate: step 5/7. The protein operates within metabolic intermediate biosynthesis; chorismate biosynthesis; chorismate from D-erythrose 4-phosphate and phosphoenolpyruvate: step 6/7. Its function is as follows. The AROM polypeptide catalyzes 5 consecutive enzymatic reactions in prechorismate polyaromatic amino acid biosynthesis. The chain is Pentafunctional AROM polypeptide from Schizosaccharomyces japonicus (strain yFS275 / FY16936) (Fission yeast).